A 291-amino-acid chain; its full sequence is MNSILDRNVRSSETTLIKPESEFDNWLSDENDGASHINVNKDSSSVLSASSSTWFEPLENIISSASSSSIGSPIEDQFISSNNEESALFPTDQFFSNPSSYSHSPEVSSSIKREEDDNALSLADFEPASLQLMPNMINTDNNDDSTPLKNEIELNDSFIKTNLDAKETKKRAPRKRLTPFQKQAHNKIEKRYRININTKIARLQQIIPWVASEQTAFEVGDSVKKQDEDGAETAATTPLPSAAATSTKLNKSMILEKAVDYILYLQNNERLYEMEVQRLKSEIDTLKQDQK.

The interval 89–109 is disordered; that stretch reads FPTDQFFSNPSSYSHSPEVSS. The span at 96 to 109 shows a compositional bias: low complexity; the sequence is SNPSSYSHSPEVSS. Position 104 is a phosphoserine (S104). In terms of domain architecture, bHLH spans 180-265; it reads FQKQAHNKIE…EKAVDYILYL (86 aa). H185, E189, and R193 together coordinate DNA. The segment at 221 to 245 is disordered; sequence DSVKKQDEDGAETAATTPLPSAAAT. Residues 233-245 are compositionally biased toward low complexity; sequence TAATTPLPSAAAT. Residue T237 is modified to Phosphothreonine.

As to quaternary structure, homodimer. Efficient DNA binding requires dimerization with another bHLH protein.

Its subcellular location is the nucleus. Its function is as follows. Transcriptional activator of glycolytic gene expression, such as enolase genes (ENO1 and ENO2), glyceraldehyde-3-phosphate dehydrogenase gene (TDH), phosphoglycerate kinase (PGK1), phosphoglycerate mutase (PGM1), pyruvate kinase (PYK1) and triosephosphate isomerase (TPI1) genes. Binds DNA on E-box motifs: 5'-CANNTG-3'. In response to adenylic nucleotide reduction, activates Ty1 mRNA transcription, possibly by controlling Ty1 antisense transcription. Acts as a cell cycle transcription factor. Its function may also be linked to sulfur metabolism and the cross-regulation between phosphate and sulfate metabolism. The chain is Transcription factor TYE7 from Saccharomyces cerevisiae (strain ATCC 204508 / S288c) (Baker's yeast).